The chain runs to 61 residues: Small ribosomal subunit protein uS14B (61 aa).

Zn(2+) is bound by residues Cys-24, Cys-27, Cys-40, and Cys-43.

This sequence belongs to the universal ribosomal protein uS14 family. Zinc-binding uS14 subfamily. In terms of assembly, part of the 30S ribosomal subunit. Contacts proteins S3 and S10. Zn(2+) is required as a cofactor.

Functionally, binds 16S rRNA, required for the assembly of 30S particles and may also be responsible for determining the conformation of the 16S rRNA at the A site. The protein is Small ribosomal subunit protein uS14B of Kineococcus radiotolerans (strain ATCC BAA-149 / DSM 14245 / SRS30216).